Here is a 473-residue protein sequence, read N- to C-terminus: Serine palmitoyltransferase 1 (473 aa).

Residues methionine 1 to proline 66 are interaction with SPTLC2. The helical transmembrane segment at alanine 16–isoleucine 36 threads the bilayer. A Phosphotyrosine; by ABL modification is found at tyrosine 164.

This sequence belongs to the class-II pyridoxal-phosphate-dependent aminotransferase family. Component of the serine palmitoyltransferase (SPT) complex, which is also composed of SPTLC2 or SPTLC3 and SPTSSA or SPTSSB. The heterodimer with SPTLC2 or SPTLC3 forms the catalytic core of the enzyme, while SPTSSA or SPTSSB subunits determine substrate specificity. SPT also interacts with ORMDL proteins, especially ORMDL3, which negatively regulate SPT activity in the presence of ceramides. Forms dimers of heterodimers with SPTLC2. Interacts with RTN4. Pyridoxal 5'-phosphate is required as a cofactor. In terms of processing, phosphorylation at Tyr-164 inhibits activity and promotes cell survival.

It localises to the endoplasmic reticulum membrane. The catalysed reaction is L-serine + hexadecanoyl-CoA + H(+) = 3-oxosphinganine + CO2 + CoA. It carries out the reaction octadecanoyl-CoA + L-serine + H(+) = 3-oxoeicosasphinganine + CO2 + CoA. The enzyme catalyses tetradecanoyl-CoA + L-serine + H(+) = 3-oxohexadecasphinganine + CO2 + CoA. It catalyses the reaction dodecanoyl-CoA + L-serine + H(+) = 3-oxotetradecasphinganine + CO2 + CoA. It participates in lipid metabolism; sphingolipid metabolism. Its activity is regulated as follows. SPT complex catalytic activity is negatively regulated by ORMDL proteins, including ORMDL3, in the presence of ceramides. This mechanism allows to maintain ceramide levels at sufficient concentrations for the production of complex sphingolipids, but which prevents the accumulation of ceramides to levels that trigger apoptosis. Component of the serine palmitoyltransferase multisubunit enzyme (SPT) that catalyzes the initial and rate-limiting step in sphingolipid biosynthesis by condensing L-serine and activated acyl-CoA (most commonly palmitoyl-CoA) to form long-chain bases. The SPT complex is also composed of SPTLC2 or SPTLC3 and SPTSSA or SPTSSB. Within this complex, the heterodimer with SPTLC2 or SPTLC3 forms the catalytic core. The composition of the serine palmitoyltransferase (SPT) complex determines the substrate preference. The SPTLC1-SPTLC2-SPTSSA complex shows a strong preference for C16-CoA substrate, while the SPTLC1-SPTLC3-SPTSSA isozyme uses both C14-CoA and C16-CoA as substrates, with a slight preference for C14-CoA. The SPTLC1-SPTLC2-SPTSSB complex shows a strong preference for C18-CoA substrate, while the SPTLC1-SPTLC3-SPTSSB isozyme displays an ability to use a broader range of acyl-CoAs, without apparent preference. Required for adipocyte cell viability and metabolic homeostasis. The sequence is that of Serine palmitoyltransferase 1 (SPTLC1) from Pongo abelii (Sumatran orangutan).